Consider the following 545-residue polypeptide: Glucose-6-phosphate isomerase (545 aa).

Glu-351 serves as the catalytic Proton donor. Catalysis depends on residues His-382 and Lys-510.

The protein belongs to the GPI family.

The protein resides in the cytoplasm. The catalysed reaction is alpha-D-glucose 6-phosphate = beta-D-fructose 6-phosphate. Its pathway is carbohydrate biosynthesis; gluconeogenesis. It participates in carbohydrate degradation; glycolysis; D-glyceraldehyde 3-phosphate and glycerone phosphate from D-glucose: step 2/4. Its function is as follows. Catalyzes the reversible isomerization of glucose-6-phosphate to fructose-6-phosphate. The protein is Glucose-6-phosphate isomerase of Shewanella denitrificans (strain OS217 / ATCC BAA-1090 / DSM 15013).